A 1241-amino-acid chain; its full sequence is DNA-directed RNA polymerase subunit beta (1241 aa).

Residues 1201–1224 (AEEEQDTDVDYITEDDFESPDPEI) form a disordered region.

This sequence belongs to the RNA polymerase beta chain family. In terms of assembly, the RNAP catalytic core consists of 2 alpha, 1 beta, 1 beta' and 1 omega subunit. When a sigma factor is associated with the core the holoenzyme is formed, which can initiate transcription.

It catalyses the reaction RNA(n) + a ribonucleoside 5'-triphosphate = RNA(n+1) + diphosphate. Its function is as follows. DNA-dependent RNA polymerase catalyzes the transcription of DNA into RNA using the four ribonucleoside triphosphates as substrates. This Alkaliphilus oremlandii (strain OhILAs) (Clostridium oremlandii (strain OhILAs)) protein is DNA-directed RNA polymerase subunit beta.